The chain runs to 320 residues: tRNA pseudouridine synthase B (320 aa).

Aspartate 48 functions as the Nucleophile in the catalytic mechanism.

It belongs to the pseudouridine synthase TruB family. Type 1 subfamily.

It carries out the reaction uridine(55) in tRNA = pseudouridine(55) in tRNA. Functionally, responsible for synthesis of pseudouridine from uracil-55 in the psi GC loop of transfer RNAs. The protein is tRNA pseudouridine synthase B of Mycobacterium leprae (strain TN).